Here is an 87-residue protein sequence, read N- to C-terminus: Cell division topological specificity factor (87 aa).

Belongs to the MinE family.

Its function is as follows. Prevents the cell division inhibition by proteins MinC and MinD at internal division sites while permitting inhibition at polar sites. This ensures cell division at the proper site by restricting the formation of a division septum at the midpoint of the long axis of the cell. This Leptothrix cholodnii (strain ATCC 51168 / LMG 8142 / SP-6) (Leptothrix discophora (strain SP-6)) protein is Cell division topological specificity factor.